We begin with the raw amino-acid sequence, 314 residues long: GATA zinc finger domain-containing protein 19 (314 aa).

This chain is GATA zinc finger domain-containing protein 19 (gtaS), found in Dictyostelium discoideum (Social amoeba).